Here is a 672-residue protein sequence, read N- to C-terminus: Hydroxyproline O-galactosyltransferase GALT5 (672 aa).

Residues 1 to 28 (MKKPKLSKVEKIDKIDLFSSLWKQRSVR) are Cytoplasmic-facing. Residues 29-49 (VIMAIGFLYLVIVSVEIPLVF) form a helical; Signal-anchor for type II membrane protein membrane-spanning segment. The Lumenal segment spans residues 50–672 (KSWSSSSVPL…QNKPECCNMR (623 aa)). Residues 191-392 (KLMELPCGLT…DIDVHSVFVA (202 aa)) enclose the Galectin domain. Residues Asn-306 and Asn-620 are each glycosylated (N-linked (GlcNAc...) asparagine).

It belongs to the glycosyltransferase 31 family. The cofactor is Mn(2+). In terms of tissue distribution, expressed in juvenile leaves, stems, cauline leaves and siliques.

Its subcellular location is the golgi apparatus membrane. It functions in the pathway protein modification; protein glycosylation. In terms of biological role, possesses hydroxyproline O-galactosyltransferase activity. Transfers galactose from UDP-galactose to hydroxyproline residues in the arabinogalactan proteins (AGPs). Is specific for AGPs containing non-contiguous peptidyl hydroxyproline residues. Utilizes UDP-galactose solely as sugar donor. The addition of galactose onto the peptidyl hydroxyproline residues in AGP core proteins represents the first committed step in arabinogalactan polysaccharide addition. AGP glycans play essential roles in both vegetative and reproductive plant growth. This Arabidopsis thaliana (Mouse-ear cress) protein is Hydroxyproline O-galactosyltransferase GALT5.